Consider the following 700-residue polypeptide: Elongation factor G 1 (700 aa).

Residues 8–290 (ERYRNIGISA…AVIEYLPSPI (283 aa)) enclose the tr-type G domain. Residues 17-24 (AHIDAGKT), 88-92 (DTPGH), and 142-145 (NKMD) each bind GTP.

It belongs to the TRAFAC class translation factor GTPase superfamily. Classic translation factor GTPase family. EF-G/EF-2 subfamily.

The protein localises to the cytoplasm. In terms of biological role, catalyzes the GTP-dependent ribosomal translocation step during translation elongation. During this step, the ribosome changes from the pre-translocational (PRE) to the post-translocational (POST) state as the newly formed A-site-bound peptidyl-tRNA and P-site-bound deacylated tRNA move to the P and E sites, respectively. Catalyzes the coordinated movement of the two tRNA molecules, the mRNA and conformational changes in the ribosome. The chain is Elongation factor G 1 from Bordetella avium (strain 197N).